Here is a 641-residue protein sequence, read N- to C-terminus: XK-related protein 6 (641 aa).

Disordered stretches follow at residues 20–47 (LDEAVGSGGEEDGEPGGGGCGGGGDGSE) and 84–120 (RSAAADGGDQPLQPPAAPGAGRQPPTPSAARPEPPPP). Gly residues predominate over residues 34–46 (PGGGGCGGGGDGS). The segment covering 107 to 120 (PPTPSAARPEPPPP) has biased composition (pro residues). 7 helical membrane-spanning segments follow: residues 130–150 (LWIVLALLVFFGDVGTDLWLA), 159–179 (YVYFGLTLFFVLVPSLLVQSL), 318–338 (TLPCVSSVTSLMSLAWVLASY), 372–392 (VISFALFASIFQLYFGIFVVV), 413–433 (WEEILFNMVVGIVYIFCWFNV), 442–462 (MFAYYTIVLTENAALTFLWYF), and 473–493 (AVPALCCVFISFVAGIAMMLL).

This sequence belongs to the XK family.

The protein resides in the cell membrane. In Homo sapiens (Human), this protein is XK-related protein 6.